The primary structure comprises 37 residues: Cytochrome b6-f complex subunit 5 (37 aa).

A helical transmembrane segment spans residues 5–25; that stretch reads FLFGIVLGLIPITLAGLFVTA.

This sequence belongs to the PetG family. In terms of assembly, the 4 large subunits of the cytochrome b6-f complex are cytochrome b6, subunit IV (17 kDa polypeptide, PetD), cytochrome f and the Rieske protein, while the 4 small subunits are PetG, PetL, PetM and PetN. The complex functions as a dimer.

The protein localises to the plastid. It localises to the chloroplast thylakoid membrane. In terms of biological role, component of the cytochrome b6-f complex, which mediates electron transfer between photosystem II (PSII) and photosystem I (PSI), cyclic electron flow around PSI, and state transitions. PetG is required for either the stability or assembly of the cytochrome b6-f complex. This is Cytochrome b6-f complex subunit 5 from Platanus occidentalis (Sycamore).